A 506-amino-acid polypeptide reads, in one-letter code: Maturase K (506 aa).

It belongs to the intron maturase 2 family. MatK subfamily.

It is found in the plastid. It localises to the chloroplast. Usually encoded in the trnK tRNA gene intron. Probably assists in splicing its own and other chloroplast group II introns. The sequence is that of Maturase K from Manihot esculenta (Cassava).